The following is a 297-amino-acid chain: Phosphoribosylaminoimidazole-succinocarboxamide synthase (297 aa).

Belongs to the SAICAR synthetase family.

It catalyses the reaction 5-amino-1-(5-phospho-D-ribosyl)imidazole-4-carboxylate + L-aspartate + ATP = (2S)-2-[5-amino-1-(5-phospho-beta-D-ribosyl)imidazole-4-carboxamido]succinate + ADP + phosphate + 2 H(+). The protein operates within purine metabolism; IMP biosynthesis via de novo pathway; 5-amino-1-(5-phospho-D-ribosyl)imidazole-4-carboxamide from 5-amino-1-(5-phospho-D-ribosyl)imidazole-4-carboxylate: step 1/2. The chain is Phosphoribosylaminoimidazole-succinocarboxamide synthase from Corynebacterium glutamicum (strain R).